Here is a 397-residue protein sequence, read N- to C-terminus: Cathepsin E-A (397 aa).

The first 16 residues, 1–16 (MRQILVLLLFATLVYG), serve as a signal peptide directing secretion. Residues 17 to 52 (LIRVPLKRQKSIRKTLKEKGKLSHIWTQQGIDMVQY) constitute a propeptide, activation peptide. One can recognise a Peptidase A1 domain in the interval 74 to 385 (YFGEISVGTP…DRGNNRVGLA (312 aa)). Residue asparagine 86 is glycosylated (N-linked (GlcNAc...) asparagine). Residue aspartate 92 is part of the active site. A disulfide bridge connects residues cysteine 105 and cysteine 110. Asparagine 130 is a glycosylation site (N-linked (GlcNAc...) asparagine). Cysteine 268 and cysteine 272 are oxidised to a cystine. The active site involves aspartate 277. Cysteine 310 and cysteine 344 form a disulfide bridge.

It belongs to the peptidase A1 family. In terms of assembly, homodimer; disulfide-linked. Glycosylated. Contains high mannose-type oligosaccharide. Expressed predominantly in the larval foregut and the anterior and posterior adult stomach.

It localises to the endosome. It catalyses the reaction Similar to cathepsin D, but slightly broader specificity.. Its function is as follows. May have a role in immune function. Probably involved in the processing of antigenic peptides during MHC class II-mediated antigen presentation. In Xenopus laevis (African clawed frog), this protein is Cathepsin E-A (ctse-a).